The chain runs to 1102 residues: MDADWDEVTRIAFPAPGSNDYPRPATALAFDTIAELLWAGNDRGRVVSFYGRDLQRYTAFKIHPPSEGPVRQFLFHDKGVIALGTRSVHMAMRRGPTLWNIRHDEMENLQCMSFTSKGASEIIVAGFQDTMFVIDVVKGEIVKQKSKYICAATRTGCVDLLDPITFKTVRSWQAHASYINDMDAQNDFIVTCGGSLKQQAAQTYMLDPYVNVFDLKNMTSMKPMPFPPLAAHVRLHPRMLTTSIVTSQHGQMHVVDIMNPNTSNVRYANVMSFINLFEIAPSGEALAMADTECNIHLWGSPSKIHFTDMAIPIEMPKAEEPAPMLDWSPDTPLSSIGMPYYREQLFSAWPSDIISDIGAPPVQLDPSFLASLKQMEWGFYGRNSRGLRRNQVEDTRACMKPSMQPPKFLSEKARESAMSYSAAVPDPKVEQVPESSTDELESLKPEAPPIYRNLEIKYSKFGVDDFDFGYYNKTQYAGLENHIPNSYANSLLQLIHYTPLLRNMALQHAATACVTDLCLLCELGFVFDMLQKAEGSTCQATNMFKALGATPQAAPLGLLEEETHVPSLSTMSQGLSRFLFDRINHDYRSINPISTTLEQTLFNLPQPPTPDELVSRVLATSAVVTIKCMNCRSETTRPGTAQVNDLMYPPPKGSARGGRMHKTTFSQVLKTGVERETASKGWCSRCQRYQNLQMRKTIHSVPAVLAINSAISSQEHRKLWATPGWLPEEIGIIVDQGQFFCFEGEDLKLHLQRGMHNITVYSLIGMVVNIESSSPQKTHLVSVINVAHADAAPSAESKWHLFNDFSVRPISTAEALTFNAAWKLPAVLLFQVKAANNKTNMDWKTKLDTSLLYQDLTPHSDEKTYHVLDLEAEPPGPDTIVGLDTEFVSLKQPEIQMNSDGERETIRPMSHALARVSVVRGQGEHEGEAFIDDYIAIREPVVDYLTLYSGITPGDLDPRTTKHNLVSLKVAYKKLWVLLNLGCKFLGHGLRQDFRVINIQVPRAQVIDTIQVFYLKARLRKLSLAFLAWFLLKEDIQLETHDSIEDARTALKLYRKYLEFEDAGILEAMLEDIYKVGRATNFKPPRKDDQVIQRTDTPFLSR.

WD repeat units lie at residues 20 to 59 (DYPRPATALAFDTIAELLWAGNDRGRVVSFYGRDLQRYTA), 104 to 144 (DEME…IVKQ), and 269 to 308 (NVMSFINLFEIAPSGEALAMADTECNIHLWGSPSKIHFTD). A linker region spans residues 308–445 (DMAIPIEMPK…STDELESLKP (138 aa)). Residues 423-442 (AVPDPKVEQVPESSTDELES) are disordered. Residues 446-833 (EAPPIYRNLE…LPAVLLFQVK (388 aa)) enclose the USP domain. In terms of domain architecture, Exonuclease spans 881 to 1054 (VGLDTEFVSL…EDARTALKLY (174 aa)). A divalent metal cation contacts are provided by D884, E886, D993, and D1046.

The protein belongs to the peptidase C19 family. PAN2 subfamily. In terms of assembly, forms a heterotrimer with an asymmetric homodimer of the regulatory subunit PAN3 to form the poly(A)-nuclease (PAN) deadenylation complex. A divalent metal cation serves as cofactor.

The protein resides in the cytoplasm. It carries out the reaction Exonucleolytic cleavage of poly(A) to 5'-AMP.. Positively regulated by the regulatory subunit PAN3. Catalytic subunit of the poly(A)-nuclease (PAN) deadenylation complex, one of two cytoplasmic mRNA deadenylases involved in mRNA turnover. PAN specifically shortens poly(A) tails of RNA and the activity is stimulated by poly(A)-binding protein PAB1. PAN deadenylation is followed by rapid degradation of the shortened mRNA tails by the CCR4-NOT complex. Deadenylated mRNAs are then degraded by two alternative mechanisms, namely exosome-mediated 3'-5' exonucleolytic degradation, or deadenylation-dependent mRNA decaping and subsequent 5'-3' exonucleolytic degradation by XRN1. May also be involved in post-transcriptional maturation of mRNA poly(A) tails. This chain is PAN2-PAN3 deadenylation complex catalytic subunit PAN2, found in Chaetomium globosum (strain ATCC 6205 / CBS 148.51 / DSM 1962 / NBRC 6347 / NRRL 1970) (Soil fungus).